We begin with the raw amino-acid sequence, 144 residues long: Probable disulfide formation protein (144 aa).

The chain crosses the membrane as a helical span at residues 10–29 (WNLLLLTWLVALISTLSALF). A disulfide bond links cysteine 39 and cysteine 42. The next 2 helical transmembrane spans lie at 44–63 (FQRA…CYRS) and 70–87 (YALP…VHTL). A disulfide bridge links cysteine 100 with cysteine 107. Residues 116 to 138 (GVVPLPALALFAFIIIAILLIII) form a helical membrane-spanning segment.

It belongs to the DsbB family. BdbC subfamily.

The protein localises to the cell inner membrane. Functionally, required for disulfide bond formation in some proteins. The polypeptide is Probable disulfide formation protein (Metapseudomonas resinovorans (Pseudomonas resinovorans)).